We begin with the raw amino-acid sequence, 465 residues long: Serine carboxypeptidase 24 (465 aa).

The signal sequence occupies residues 1-24 (MARTHFIFLLLVALLSTTFPSSSS). N-linked (GlcNAc...) asparagine glycans are attached at residues Asn54, Asn105, and Asn139. Disulfide bonds link Cys88/Cys349, Cys249/Cys260, and Cys285/Cys317. Ser181 is an active-site residue. Residues Asn250, Asn293, and Asn338 are each glycosylated (N-linked (GlcNAc...) asparagine). The propeptide at 287 to 316 (AAQQKKNTTGFFVRMKNTLLRRRLVSGYDP) is linker peptide. Catalysis depends on residues Asp386 and His438.

It belongs to the peptidase S10 family. In terms of assembly, heterodimer. In terms of processing, N-glycosylated. Expressed in shoots, leaves, cauline leaves, siliques and flowers. Expressed a low levels in roots and stems.

It localises to the secreted. The protein resides in the extracellular space. The catalysed reaction is Preferential release of a C-terminal arginine or lysine residue.. With respect to regulation, completely inhibited by phenylmethylsulfonyl fluoride (PMSF) and partially by leupeptin. Its function is as follows. Active serine carboxypeptidase with broad substrate preference, including basic and hydrophilic groups. Processes a protein involved in an early event in the brassinosteroid signaling pathway. In Arabidopsis thaliana (Mouse-ear cress), this protein is Serine carboxypeptidase 24 (SCPL24).